A 117-amino-acid chain; its full sequence is Large ribosomal subunit protein bL20 (117 aa).

This sequence belongs to the bacterial ribosomal protein bL20 family.

Binds directly to 23S ribosomal RNA and is necessary for the in vitro assembly process of the 50S ribosomal subunit. It is not involved in the protein synthesizing functions of that subunit. The polypeptide is Large ribosomal subunit protein bL20 (Ruminiclostridium cellulolyticum (strain ATCC 35319 / DSM 5812 / JCM 6584 / H10) (Clostridium cellulolyticum)).